The following is a 589-amino-acid chain: Probable ATP-dependent RNA helicase DDX59 (589 aa).

2 disordered regions span residues 1-36 and 48-98; these read MFVP…QLEG and KEAV…SKTQ. A compositionally biased stretch (basic and acidic residues) spans 12–27; that stretch reads NSNDDLKSCEAKKSKP. Residue Lys26 forms a Glycyl lysine isopeptide (Lys-Gly) (interchain with G-Cter in SUMO2) linkage. Ser64 carries the phosphoserine modification. Basic and acidic residues predominate over residues 80-91; sequence GVKDSHPSEEPV. Residues 104 to 133 form an HIT-type zinc finger; sequence GEPVCVVCGRYGEYICDKTDEDVCSLECKA. Ser156 and Ser160 each carry phosphoserine. A Q motif motif is present at residues 203 to 231; that stretch reads IDFEHCGFPETLNQNLKKSGYEVPTPIQM. Residues 234-375 form the Helicase ATP-binding domain; the sequence is IPVGLLGRDI…DQLLHNPVRI (142 aa). 247–254 is a binding site for ATP; sequence ADTGSGKT. Positions 323 to 326 match the DEAD box motif; it reads VKAD. Residues 399 to 549 form the Helicase C-terminal domain; sequence KKKKLFEILN…ILPPQLLNSP (151 aa).

The protein belongs to the DEAD box helicase family. DDX59 subfamily. As to quaternary structure, interacts (via HIT-type zinc finger) with the RUVBL1/RUVBL2 complex in the presence of ADP.

The protein localises to the cytoplasm. It is found in the nucleus. It carries out the reaction ATP + H2O = ADP + phosphate + H(+). This Rattus norvegicus (Rat) protein is Probable ATP-dependent RNA helicase DDX59 (Ddx59).